A 366-amino-acid polypeptide reads, in one-letter code: Phospho-N-acetylmuramoyl-pentapeptide-transferase (366 aa).

10 consecutive transmembrane segments (helical) span residues 27–47 (AAMF…IASL), 71–91 (TPTM…LLWA), 93–113 (LSNV…AIGF), 134–154 (LAIE…AAKI), 174–194 (ALLN…VSAG), 205–225 (GLAI…AYLA), 245–265 (LAVI…FNAP), 268–288 (AIFM…TVAV), 294–314 (IVMV…IIQV), and 343–363 (QVVI…LATL).

The protein belongs to the glycosyltransferase 4 family. MraY subfamily. Mg(2+) is required as a cofactor.

It localises to the cell inner membrane. The catalysed reaction is UDP-N-acetyl-alpha-D-muramoyl-L-alanyl-gamma-D-glutamyl-meso-2,6-diaminopimeloyl-D-alanyl-D-alanine + di-trans,octa-cis-undecaprenyl phosphate = di-trans,octa-cis-undecaprenyl diphospho-N-acetyl-alpha-D-muramoyl-L-alanyl-D-glutamyl-meso-2,6-diaminopimeloyl-D-alanyl-D-alanine + UMP. It functions in the pathway cell wall biogenesis; peptidoglycan biosynthesis. Functionally, catalyzes the initial step of the lipid cycle reactions in the biosynthesis of the cell wall peptidoglycan: transfers peptidoglycan precursor phospho-MurNAc-pentapeptide from UDP-MurNAc-pentapeptide onto the lipid carrier undecaprenyl phosphate, yielding undecaprenyl-pyrophosphoryl-MurNAc-pentapeptide, known as lipid I. The chain is Phospho-N-acetylmuramoyl-pentapeptide-transferase from Allorhizobium ampelinum (strain ATCC BAA-846 / DSM 112012 / S4) (Agrobacterium vitis (strain S4)).